The chain runs to 79 residues: Exodeoxyribonuclease 7 small subunit (79 aa).

Belongs to the XseB family. As to quaternary structure, heterooligomer composed of large and small subunits.

The protein resides in the cytoplasm. The enzyme catalyses Exonucleolytic cleavage in either 5'- to 3'- or 3'- to 5'-direction to yield nucleoside 5'-phosphates.. In terms of biological role, bidirectionally degrades single-stranded DNA into large acid-insoluble oligonucleotides, which are then degraded further into small acid-soluble oligonucleotides. In Haemophilus influenzae (strain PittGG), this protein is Exodeoxyribonuclease 7 small subunit.